The sequence spans 1118 residues: Protein argonaute 1B (1118 aa).

2 disordered regions span residues 1–175 and 188–246; these read MALQ…SRTV and APMV…RFPL. Residues 10 to 24 are compositionally biased toward basic residues; the sequence is PHHHQVPIMVKKKRT. Positions 25 to 35 are enriched in low complexity; that stretch reads GSGSTGESSGE. Gly residues-rich tracts occupy residues 54–92, 100–110, and 118–128; these read QHGG…HHPG, GRGGPGSHHPG, and GRGGSGSHHPG. Low complexity-rich tracts occupy residues 148 to 157 and 193 to 219; these read RGGMPQPYYG and PTPS…QFQQ. The span at 220–241 shows a compositional bias: polar residues; sequence LATRDQSSTSQAIQIAPPSSKS. The PAZ domain occupies 457–570; the sequence is PVIDFVAQLL…LPMEVCKIVE (114 aa). Residues 746–1067 form the Piwi domain; sequence LLIVILPDNN…AAFRARFYME (322 aa).

This sequence belongs to the argonaute family. Ago subfamily.

Probably involved in the RNA silencing pathway. May bind to short RNAs such as microRNAs (miRNAs) or short interfering RNAs (siRNAs), and represses the translation of mRNAs which are complementary to them. This Oryza sativa subsp. japonica (Rice) protein is Protein argonaute 1B (AGO1B).